Reading from the N-terminus, the 377-residue chain is Citrate synthase (377 aa).

Catalysis depends on residues His220, His259, and Asp313.

This sequence belongs to the citrate synthase family. In terms of assembly, homodimer.

It carries out the reaction oxaloacetate + acetyl-CoA + H2O = citrate + CoA + H(+). The protein operates within carbohydrate metabolism; tricarboxylic acid cycle; isocitrate from oxaloacetate: step 1/2. In terms of biological role, might regulate the synthesis and function of enzymes involved in later enzymatic steps of Krebs cycle. Loss in activity results in sporulation defect. The sequence is that of Citrate synthase (gltA) from Deinococcus radiodurans (strain ATCC 13939 / DSM 20539 / JCM 16871 / CCUG 27074 / LMG 4051 / NBRC 15346 / NCIMB 9279 / VKM B-1422 / R1).